The primary structure comprises 448 residues: Serine/threonine-protein phosphatase 2A regulatory subunit B'' subunit gamma (448 aa).

EF-hand domains are found at residues Pro268–Cys303 and Lys336–Gln371. Asp281, Asp283, Asn285, Met287, and Glu292 together coordinate Ca(2+).

The protein resides in the nucleus. It is found in the cytoplasm. Possible role in the regulation of cell death. The chain is Serine/threonine-protein phosphatase 2A regulatory subunit B'' subunit gamma (ppp2r3c) from Xenopus tropicalis (Western clawed frog).